The primary structure comprises 173 residues: Myosin light chain 5 (173 aa).

Residues Met-1–Ser-20 are disordered. EF-hand domains follow at residues Thr-30–Thr-65, Asp-100–Lys-135, and Met-136–Lys-171. Ca(2+) is bound by residues Asp-43, Asn-45, Asp-47, and Asp-54.

In terms of assembly, myosin is a hexamer of 2 heavy chains and 4 light chains. In terms of tissue distribution, expressed in fetal skeletal muscle and retina.

The protein is Myosin light chain 5 (MYL5) of Homo sapiens (Human).